A 455-amino-acid polypeptide reads, in one-letter code: T-box protein VegT-B (455 aa).

Positions 57-230 (LWTQFHQEGT…HNPFAKGFRE (174 aa)) form a DNA-binding region, T-box. Basic and acidic residues predominate over residues 229 to 241 (REQERSHKRDDVL). Disordered regions lie at residues 229-276 (REQE…RIKE) and 295-350 (ANQG…RRLT). The segment covering 308–326 (GVNQEQQVPTSSSNFYIKS) has biased composition (polar residues).

As to quaternary structure, forms a repression complex on the promoters of the nodal/nr1 and siamois genes with the maternal factors tcf7l1/tcf3 and pouf5.1/oct-25. Interacts (via C-terminus) with tcf7l1/tcf3 (via N-terminus). Also interacts with the other POU-domain transcription factors pou5f1.2/oct-91 and pou5f1.3/oct-60. In terms of tissue distribution, maternally localized to the vegetal hemisphere of oocytes. Zygotic expression parallels blastopore formation and shifts from dorsal expression in the marginal zone of late blastula and early gastrula stages to a ventral/lateral expression at later stages. During neurula and tailbud stages, expressed in the posterior and anterior ends of the embryo. During tailbud stages, expressed in a subset of interneurons in the neural tube.

It localises to the nucleus. Its function is as follows. Transcription factor required for both mesoderm and endoderm formation in the embryo; signaling determinants and concentration levels may determine which germ layer is formed. Acts together with beta-catenin to activate genes that are responsible for mesoderm induction including wnt-8, eomes t/bra, siamois, mix1 and sox17. Directly binds to promoter DNA. Patterns the mesoderm along the dorsoventral and posterior axis. Activates siamois gene transcription when alone or in combination with beta-catenin, but inhibits siamois transcription in combination with pou5f1.1/oct-25. This is T-box protein VegT-B (vegt-b) from Xenopus laevis (African clawed frog).